Here is a 137-residue protein sequence, read N- to C-terminus: Holo-[acyl-carrier-protein] synthase (137 aa).

Mg(2+)-binding residues include aspartate 8 and glutamate 57.

The protein belongs to the P-Pant transferase superfamily. AcpS family. The cofactor is Mg(2+).

It is found in the cytoplasm. The catalysed reaction is apo-[ACP] + CoA = holo-[ACP] + adenosine 3',5'-bisphosphate + H(+). Functionally, transfers the 4'-phosphopantetheine moiety from coenzyme A to a Ser of acyl-carrier-protein. This is Holo-[acyl-carrier-protein] synthase from Cereibacter sphaeroides (strain ATCC 17029 / ATH 2.4.9) (Rhodobacter sphaeroides).